We begin with the raw amino-acid sequence, 276 residues long: Adenylate kinase (276 aa).

52 to 57 contributes to the ATP binding site; that stretch reads GAGKGT. An NMP region spans residues 72–101; the sequence is ATGDMLRAQVAAKTPLGREAKKIMDAGGLV. AMP is bound by residues threonine 73, arginine 78, 99–101, 128–131, and glutamine 135; these read GLV and GFPR. The tract at residues 169 to 206 is LID; it reads GRLVHPASGRSYHKIFNPPKAPMTDDVTGEPLIQRSDD. Residues arginine 170 and 179–180 contribute to the ATP site; that span reads SY. Positions 203 and 214 each coordinate AMP. Glutamine 242 provides a ligand contact to ATP.

The protein belongs to the adenylate kinase family. AK2 subfamily. In terms of assembly, monomer.

Its subcellular location is the cytoplasm. It is found in the cytosol. It localises to the mitochondrion intermembrane space. It catalyses the reaction AMP + ATP = 2 ADP. Catalyzes the reversible transfer of the terminal phosphate group between ATP and AMP. Plays an important role in cellular energy homeostasis and in adenine nucleotide metabolism. Adenylate kinase activity is critical for regulation of the phosphate utilization and the AMP de novo biosynthesis pathways. This is Adenylate kinase (adk1) from Pyrenophora tritici-repentis (strain Pt-1C-BFP) (Wheat tan spot fungus).